Reading from the N-terminus, the 360-residue chain is Phosphoserine aminotransferase (360 aa).

R41 serves as a coordination point for L-glutamate. Pyridoxal 5'-phosphate contacts are provided by W101, T152, D172, and Q195. K196 bears the N6-(pyridoxal phosphate)lysine mark. Residue 237–238 participates in pyridoxal 5'-phosphate binding; sequence NT.

This sequence belongs to the class-V pyridoxal-phosphate-dependent aminotransferase family. SerC subfamily. As to quaternary structure, homodimer. Pyridoxal 5'-phosphate is required as a cofactor.

The protein localises to the cytoplasm. It catalyses the reaction O-phospho-L-serine + 2-oxoglutarate = 3-phosphooxypyruvate + L-glutamate. The catalysed reaction is 4-(phosphooxy)-L-threonine + 2-oxoglutarate = (R)-3-hydroxy-2-oxo-4-phosphooxybutanoate + L-glutamate. It participates in amino-acid biosynthesis; L-serine biosynthesis; L-serine from 3-phospho-D-glycerate: step 2/3. The protein operates within cofactor biosynthesis; pyridoxine 5'-phosphate biosynthesis; pyridoxine 5'-phosphate from D-erythrose 4-phosphate: step 3/5. Functionally, catalyzes the reversible conversion of 3-phosphohydroxypyruvate to phosphoserine and of 3-hydroxy-2-oxo-4-phosphonooxybutanoate to phosphohydroxythreonine. This chain is Phosphoserine aminotransferase, found in Burkholderia multivorans (strain ATCC 17616 / 249).